The following is a 460-amino-acid chain: UDP-N-acetylmuramate--L-alanine ligase (460 aa).

Residue 116-122 participates in ATP binding; that stretch reads GSHGKTT.

This sequence belongs to the MurCDEF family.

It localises to the cytoplasm. It carries out the reaction UDP-N-acetyl-alpha-D-muramate + L-alanine + ATP = UDP-N-acetyl-alpha-D-muramoyl-L-alanine + ADP + phosphate + H(+). It functions in the pathway cell wall biogenesis; peptidoglycan biosynthesis. Cell wall formation. The polypeptide is UDP-N-acetylmuramate--L-alanine ligase (Caldanaerobacter subterraneus subsp. tengcongensis (strain DSM 15242 / JCM 11007 / NBRC 100824 / MB4) (Thermoanaerobacter tengcongensis)).